We begin with the raw amino-acid sequence, 460 residues long: tRNA modification GTPase MnmE (460 aa).

3 residues coordinate (6S)-5-formyl-5,6,7,8-tetrahydrofolate: Arg-22, Glu-87, and Arg-126. Residues 222–381 (GLKTAIIGKP…LENTIYNLVF (160 aa)) form the TrmE-type G domain. Residue Asn-232 coordinates K(+). GTP-binding positions include 232–237 (NVGKSS), 251–257 (TDIPGTT), and 276–279 (DTAG). Position 236 (Ser-236) interacts with Mg(2+). K(+) is bound by residues Thr-251, Ile-253, and Thr-256. Thr-257 provides a ligand contact to Mg(2+). Residue Lys-460 coordinates (6S)-5-formyl-5,6,7,8-tetrahydrofolate.

It belongs to the TRAFAC class TrmE-Era-EngA-EngB-Septin-like GTPase superfamily. TrmE GTPase family. Homodimer. Heterotetramer of two MnmE and two MnmG subunits. K(+) serves as cofactor.

It localises to the cytoplasm. In terms of biological role, exhibits a very high intrinsic GTPase hydrolysis rate. Involved in the addition of a carboxymethylaminomethyl (cmnm) group at the wobble position (U34) of certain tRNAs, forming tRNA-cmnm(5)s(2)U34. This chain is tRNA modification GTPase MnmE, found in Thermoanaerobacter pseudethanolicus (strain ATCC 33223 / 39E) (Clostridium thermohydrosulfuricum).